The following is a 276-amino-acid chain: MLFFTGLQMIWIDKAMNISLSSAVAAASVSTASVGGVPHEITGGNRQEKLAQLMRQFESGGLYLRTVSDHRDEFENTFMPKLDACLGHGCDERYWSSATFIQQGLNGKVHDPHADRTGLIISADARLGGFSTFDAATANVPSGLEPSQYFPGQFPKFDMMGAYQATWNEDIFSVDATAVSEQQMDELGIPDEYRSVFDFDRIQEKMAQPRLAGREVEPTEAKICYQPKDVLGIYVDVDSPASQSKARELQQAMREQGFDLPFIAYRGGAAQELASV.

In terms of assembly, interacts directly with host ubiquitin.

Its subcellular location is the secreted. The protein resides in the host cell. It carries out the reaction L-threonyl-[protein] + NAD(+) = O-(ADP-D-ribosyl)-L-threonyl-[protein] + nicotinamide + H(+). Its function is as follows. ADP-ribosyltransferase that specifically modifies host ubiquitin on 'Thr-66' residue, which causes the shutdown of polyubiquitin synthesis and disrupts the recognition and reversal of polyubiquitin in host cells during infection. Threonine ADP-ribosylation of ubiquitin prevents the transfer of ubiquitin from ubiquitin-activating enzyme E1 to ubiquitin-conjugating enzyme E2, which inhibits subsequent ubiquitin activation and leads to the shutdown of polyubiquitin synthesis in host cells. The modification also causes dysfunction of polyubiquitin chains in cells, thereby blocking host ubiquitin signaling. ADP-ribosylation by CteC is likely irreversible. Plays a crucial role in bacterial colonization in mice during infection. The protein is NAD(+)--protein-threonine ADP-ribosyltransferase of Chromobacterium violaceum (strain ATCC 12472 / DSM 30191 / JCM 1249 / CCUG 213 / NBRC 12614 / NCIMB 9131 / NCTC 9757 / MK).